The chain runs to 61 residues: MTIAERLRQEGHQIGWQEGKLEGLHEQAIKIALRMLEQGFDRDQVLAATQLSEADLAANNH.

This is an uncharacterized protein from Escherichia coli (strain K12).